A 101-amino-acid chain; its full sequence is Venom peptide Pc (101 aa).

Residues 1 to 20 (MSHLRIAVIFLCTLFALTAG) form the signal peptide.

The protein belongs to the scorpion La1-like peptide family. Contains 4 disulfide bonds. As to expression, expressed by the venom gland.

The protein localises to the secreted. This chain is Venom peptide Pc, found in Pandinus cavimanus (Tanzanian red clawed scorpion).